The chain runs to 552 residues: MSDIAITICILALVAVIGLWIGHWKIRGVGLGIGGVLFGGIIVAHFMNQNGLKLDAHTLHFIQEFGLILFVYTIGIQVGPGFFASLLSAGLKLNGLATLIVVLGAVSVFVLYKVVNVDLDIILGIYSGAVTNTPSLGAGQQILTELGIENANSTMGMAYAMAYPFGICGILLSMWLIRLFFKIKVEEEEKQFQKASGQDKESLTTVNVKVTNPNLSGLRLIDIPGFDNKDVVCSRLKRQENISVPSADTIIAIDDVLHLVGEINALKKMKLVIGEEIDMPMTHLAGDLRSERIVVTNEKVLGKRIKHLGIHKKYGVVISRLNRAGVELVPTANTALQFGDVLHIVGRSDTIGNATSIIGNAQQKLQQVQMLPVFIGIGLGVLLGSIPFYIPGFPVALKLGLAGGPLVVALILARIGSVGKLYWFMPPSANLALREIGIVLFLAVVGLKSGGGFVDTLVNGQGLEWMGYGMFITFIPLMITGIIARLYMKLNYLSLCGLLAGSMTDPPALAFANAIKEDSGIAALSYATVYPLSMFLRIMSPQLLAILLWTAM.

5 helical membrane-spanning segments follow: residues 4–24, 28–48, 67–87, 95–115, and 157–177; these read IAIT…IGHW, GVGL…HFMN, LILF…ASLL, GLAT…YKVV, and MAYA…MWLI. 2 RCK C-terminal domains span residues 190 to 275 and 277 to 360; these read KQFQ…VIGE and IDMP…IIGN. A run of 6 helical transmembrane segments spans residues 370–390, 402–424, 438–458, 463–483, 495–515, and 529–549; these read MLPV…PFYI, AGGP…LYWF, IVLF…DTLV, LEWM…TGII, LCGL…ANAI, and VYPL…ILLW.

This sequence belongs to the AAE transporter (TC 2.A.81) family. YidE subfamily.

Its subcellular location is the cell membrane. In Histophilus somni (strain 2336) (Haemophilus somnus), this protein is Putative transport protein HSM_0534.